The chain runs to 398 residues: 1-deoxy-D-xylulose 5-phosphate reductoisomerase (398 aa).

NADPH-binding residues include Thr-10, Gly-11, Ser-12, Ile-13, Lys-37, Asn-38, and Asn-124. Lys-125 serves as a coordination point for 1-deoxy-D-xylulose 5-phosphate. Glu-126 contacts NADPH. Asp-150 lines the Mn(2+) pocket. Positions 151, 152, 186, and 209 each coordinate 1-deoxy-D-xylulose 5-phosphate. Mn(2+) is bound at residue Glu-152. Gly-215 serves as a coordination point for NADPH. 1-deoxy-D-xylulose 5-phosphate-binding residues include Ser-222, Asn-227, Lys-228, and Glu-231. Glu-231 provides a ligand contact to Mn(2+).

It belongs to the DXR family. In terms of assembly, homodimer. It depends on Mg(2+) as a cofactor. Requires Mn(2+) as cofactor.

It catalyses the reaction 2-C-methyl-D-erythritol 4-phosphate + NADP(+) = 1-deoxy-D-xylulose 5-phosphate + NADPH + H(+). It participates in isoprenoid biosynthesis; isopentenyl diphosphate biosynthesis via DXP pathway; isopentenyl diphosphate from 1-deoxy-D-xylulose 5-phosphate: step 1/6. Functionally, catalyzes the NADPH-dependent rearrangement and reduction of 1-deoxy-D-xylulose-5-phosphate (DXP) to 2-C-methyl-D-erythritol 4-phosphate (MEP). The sequence is that of 1-deoxy-D-xylulose 5-phosphate reductoisomerase from Buchnera aphidicola subsp. Acyrthosiphon pisum (strain APS) (Acyrthosiphon pisum symbiotic bacterium).